A 270-amino-acid polypeptide reads, in one-letter code: Probable ribosome biogenesis GTPase A (270 aa).

The 155-residue stretch at 20–174 (HDQLKKLSSQ…LSDTPGVFLK (155 aa)) folds into the CP-type G domain. Residues 126–131 (NVGKSS) and glycine 170 contribute to the GTP site.

This sequence belongs to the TRAFAC class YlqF/YawG GTPase family. MTG1 subfamily.

Its subcellular location is the cytoplasm. Its function is as follows. Required for a late step of 50S ribosomal subunit assembly. Has GTPase activity. Binds to the 23S rRNA. In Mycoplasma genitalium (strain ATCC 33530 / DSM 19775 / NCTC 10195 / G37) (Mycoplasmoides genitalium), this protein is Probable ribosome biogenesis GTPase A (rbgA).